The sequence spans 410 residues: Multifunctional CCA protein (410 aa).

Residues Gly8 and Arg11 each contribute to the ATP site. CTP is bound by residues Gly8 and Arg11. Residues Asp21 and Asp23 each coordinate Mg(2+). Arg91, Arg138, and Arg141 together coordinate ATP. Arg91, Arg138, and Arg141 together coordinate CTP. The region spanning 229-347 (TGIHQEMVSD…AQLALVCEAD (119 aa)) is the HD domain.

Belongs to the tRNA nucleotidyltransferase/poly(A) polymerase family. Bacterial CCA-adding enzyme type 1 subfamily. In terms of assembly, monomer. Can also form homodimers and oligomers. The cofactor is Mg(2+). Ni(2+) serves as cofactor.

The catalysed reaction is a tRNA precursor + 2 CTP + ATP = a tRNA with a 3' CCA end + 3 diphosphate. The enzyme catalyses a tRNA with a 3' CCA end + 2 CTP + ATP = a tRNA with a 3' CCACCA end + 3 diphosphate. Functionally, catalyzes the addition and repair of the essential 3'-terminal CCA sequence in tRNAs without using a nucleic acid template. Adds these three nucleotides in the order of C, C, and A to the tRNA nucleotide-73, using CTP and ATP as substrates and producing inorganic pyrophosphate. tRNA 3'-terminal CCA addition is required both for tRNA processing and repair. Also involved in tRNA surveillance by mediating tandem CCA addition to generate a CCACCA at the 3' terminus of unstable tRNAs. While stable tRNAs receive only 3'-terminal CCA, unstable tRNAs are marked with CCACCA and rapidly degraded. The sequence is that of Multifunctional CCA protein from Xanthomonas oryzae pv. oryzae (strain MAFF 311018).